The primary structure comprises 256 residues: Diaminopimelate epimerase (256 aa).

Positions 11 and 63 each coordinate substrate. The active-site Proton donor is cysteine 72. Residues 73 to 74 (GN), asparagine 169, and 187 to 188 (ER) contribute to the substrate site. The active-site Proton acceptor is the cysteine 197. Substrate is bound at residue 198 to 199 (GT).

The protein belongs to the diaminopimelate epimerase family. Homodimer.

The protein resides in the cytoplasm. The catalysed reaction is (2S,6S)-2,6-diaminopimelate = meso-2,6-diaminopimelate. Its pathway is amino-acid biosynthesis; L-lysine biosynthesis via DAP pathway; DL-2,6-diaminopimelate from LL-2,6-diaminopimelate: step 1/1. Functionally, catalyzes the stereoinversion of LL-2,6-diaminopimelate (L,L-DAP) to meso-diaminopimelate (meso-DAP), a precursor of L-lysine and an essential component of the bacterial peptidoglycan. The chain is Diaminopimelate epimerase from Flavobacterium psychrophilum (strain ATCC 49511 / DSM 21280 / CIP 103535 / JIP02/86).